The primary structure comprises 293 residues: Ribonuclease Z (293 aa).

7 residues coordinate Zn(2+): histidine 60, histidine 62, aspartate 64, histidine 65, histidine 132, aspartate 200, and histidine 256. Aspartate 64 (proton acceptor) is an active-site residue.

The protein belongs to the RNase Z family. As to quaternary structure, homodimer. Requires Zn(2+) as cofactor.

It carries out the reaction Endonucleolytic cleavage of RNA, removing extra 3' nucleotides from tRNA precursor, generating 3' termini of tRNAs. A 3'-hydroxy group is left at the tRNA terminus and a 5'-phosphoryl group is left at the trailer molecule.. Functionally, zinc phosphodiesterase, which displays some tRNA 3'-processing endonuclease activity. Probably involved in tRNA maturation, by removing a 3'-trailer from precursor tRNA. This is Ribonuclease Z from Sulfurisphaera tokodaii (strain DSM 16993 / JCM 10545 / NBRC 100140 / 7) (Sulfolobus tokodaii).